The chain runs to 438 residues: MRNGFGKTLSLGIQHVLAMYAGAIVVPLIVGKAMGLTVEQLTYLVSIDIFMCGVATLLQVWSNRFFGIGLPVVLGCTFTAVSPMIAIGSEYGVSTVYGSIIASGILVILISFFFGKLVSFFPPVVTGSVVTIIGITLMPVAMNNMAGGEGSADFGDLSNLALAFTVLSIIVLLYRFTKGFIKSVSILIGILIGTFIAYFMGKVQFDNVSDAAVVQMIQPFYFGAPSFHAAPIITMSIVAIVSLVESTGVYFALGDLTNRRLTEIDLSKGYRAEGLAVLLGGIFNAFPYTAFSQNVGLVQLTGIKKNAVIVVTGVILMAFGLFPKIAAFTTIIPSAVLGGAMVAMFGMVIAYGIKMLSRIDFAKQENLLIVACSVGLGLGVTVVPDIFKQLPSALTLLTTNGIVAGSFTAVVLNIVYNVFSKAKKIEQEADLAEQKTAV.

13 consecutive transmembrane segments (helical) span residues 11 to 31, 41 to 61, 65 to 85, 100 to 120, 121 to 141, 154 to 174, 180 to 200, 220 to 240, 272 to 292, 308 to 328, 331 to 351, 367 to 387, and 396 to 416; these read LGIQ…LIVG, LTYL…LQVW, FFGI…SPMI, IIAS…LVSF, FPPV…MPVA, FGDL…VLLY, FIKS…AYFM, FYFG…IVAI, AEGL…TAFS, VIVV…IAAF, IIPS…VIAY, LLIV…PDIF, and LLTT…NIVY.

It belongs to the nucleobase:cation symporter-2 (NCS2) (TC 2.A.40) family.

It localises to the cell membrane. In terms of biological role, transport of xanthine in the cell. The sequence is that of Xanthine permease (pbuX) from Bacillus subtilis (strain 168).